Consider the following 165-residue polypeptide: Polcalcin Jun o 2 (165 aa).

EF-hand domains lie at 22–57, 58–86, 91–126, and 127–162; these read QSVHELEEVFKKFDANGDGKISGSELADILRSLGSD, VGEAEVKAMMEEADADGDGYVSLQEFVDL, ASVKDLKNAFKVFDRDCNGSISAAELCHTLESVGEP, and CTIEESKNIIHNVDKNGDGLISVEEFQTMMTSEMTD. 19 residues coordinate Ca(2+): Asp35, Asn37, Asp39, Lys41, Glu46, Asp71, Asp73, Asp75, Tyr77, Glu82, Asp104, Asp106, Asn108, Ser110, Glu115, Asp140, Asn142, Asp144, and Glu151.

The polypeptide is Polcalcin Jun o 2 (Juniperus oxycedrus (Prickly juniper)).